Reading from the N-terminus, the 76-residue chain is MEKLTILLLVAAVLMSTQALVERAGENHSKENINFLLKRKRAADRGMWGECKDGLTTCLAPSECCSEDCEGSCTMW.

A signal peptide spans 1–19 (MEKLTILLLVAAVLMSTQA). A propeptide spanning residues 20 to 45 (LVERAGENHSKENINFLLKRKRAADR) is cleaved from the precursor. Trp-48 carries the post-translational modification 6'-bromotryptophan. At Glu-50 the chain carries 4-carboxyglutamate. 3 disulfides stabilise this stretch: Cys-51–Cys-65, Cys-58–Cys-69, and Cys-64–Cys-73. Pro-61 carries the post-translational modification 4-hydroxyproline. 3 positions are modified to 4-carboxyglutamate: Glu-63, Glu-67, and Glu-70. At Trp-76 the chain carries 6'-bromotryptophan.

In terms of tissue distribution, expressed by the venom duct.

The protein localises to the secreted. The chain is Conotoxin Gla(1)-TxVI from Conus textile (Cloth-of-gold cone).